We begin with the raw amino-acid sequence, 156 residues long: Small ribosomal subunit protein uS7 (156 aa).

Belongs to the universal ribosomal protein uS7 family. As to quaternary structure, part of the 30S ribosomal subunit. Contacts proteins S9 and S11.

Its function is as follows. One of the primary rRNA binding proteins, it binds directly to 16S rRNA where it nucleates assembly of the head domain of the 30S subunit. Is located at the subunit interface close to the decoding center, probably blocks exit of the E-site tRNA. This chain is Small ribosomal subunit protein uS7, found in Burkholderia multivorans (strain ATCC 17616 / 249).